The following is a 56-amino-acid chain: Large ribosomal subunit protein bL32 (56 aa).

The tract at residues 1 to 34 (MAVQQNKPSRSKRGMRRAHDALKTSTISVDKTSG) is disordered.

The protein belongs to the bacterial ribosomal protein bL32 family.

This chain is Large ribosomal subunit protein bL32, found in Baumannia cicadellinicola subsp. Homalodisca coagulata.